The sequence spans 81 residues: Acyl carrier protein (81 aa).

Positions 3–78 constitute a Carrier domain; that stretch reads QEIFDKIKNI…EAVNIIAEKT (76 aa). At Ser38 the chain carries O-(pantetheine 4'-phosphoryl)serine.

The protein belongs to the acyl carrier protein (ACP) family. In terms of processing, 4'-phosphopantetheine is transferred from CoA to a specific serine of apo-ACP by AcpS. This modification is essential for activity because fatty acids are bound in thioester linkage to the sulfhydryl of the prosthetic group.

The protein localises to the cytoplasm. Its pathway is lipid metabolism; fatty acid biosynthesis. In terms of biological role, carrier of the growing fatty acid chain in fatty acid biosynthesis. The sequence is that of Acyl carrier protein from Picosynechococcus sp. (strain ATCC 27264 / PCC 7002 / PR-6) (Agmenellum quadruplicatum).